We begin with the raw amino-acid sequence, 359 residues long: Histidinol-phosphate aminotransferase 1 (359 aa).

At Lys216 the chain carries N6-(pyridoxal phosphate)lysine.

The protein belongs to the class-II pyridoxal-phosphate-dependent aminotransferase family. Histidinol-phosphate aminotransferase subfamily. Homodimer. Pyridoxal 5'-phosphate is required as a cofactor.

The enzyme catalyses L-histidinol phosphate + 2-oxoglutarate = 3-(imidazol-4-yl)-2-oxopropyl phosphate + L-glutamate. Its pathway is amino-acid biosynthesis; L-histidine biosynthesis; L-histidine from 5-phospho-alpha-D-ribose 1-diphosphate: step 7/9. In Caulobacter vibrioides (strain ATCC 19089 / CIP 103742 / CB 15) (Caulobacter crescentus), this protein is Histidinol-phosphate aminotransferase 1 (hisC1).